The primary structure comprises 373 residues: P2Y purinoceptor 1 (373 aa).

Residues 1–51 (MTEVPWSVVPNGTDAAFLAGLGSLWGNSTVASTAAVSSSFQCALTKTGFQF) are Extracellular-facing. Asn11 and Asn27 each carry an N-linked (GlcNAc...) asparagine glycan. Disulfide bonds link Cys42–Cys296 and Cys124–Cys202. Lys46 is an ADP binding site. The chain crosses the membrane as a helical span at residues 52–74 (YYLPAVYILVFIIGFLGNSVAIW). The Cytoplasmic segment spans residues 75-87 (MFVFHMKPWSGIS). The chain crosses the membrane as a helical span at residues 88-109 (VYMFNLALADFLYVLTLPALIF). At 110–125 (YYFNKTDWIFGDAMCK) the chain is on the extracellular side. The N-linked (GlcNAc...) asparagine glycan is linked to Asn113. Residues 126 to 147 (LQRFIFHVNLYGSILFLTCISA) traverse the membrane as a helical segment. Residues 148–166 (HRYSGVVYPLKSLGRLKKK) lie on the Cytoplasmic side of the membrane. Residues 167-188 (NAIYVSVLVWLIVVVAISPILF) traverse the membrane as a helical segment. The Extracellular segment spans residues 189–214 (YSGTGTRKNKTVTCYDTTSNDYLRSY). Asn197 carries N-linked (GlcNAc...) asparagine glycosylation. 203–205 (YDT) lines the ADP pocket. A helical transmembrane segment spans residues 215 to 237 (FIYSMCTTVAMFCIPLVLILGCY). Topologically, residues 238–260 (GLIVKALIYNDLDNSPLRRKSIY) are cytoplasmic. A helical membrane pass occupies residues 261 to 284 (LVIIVLTVFAVSYIPFHVMKTMNL). ADP is bound by residues 283–287 (NLRAR), 303–306 (YATY), and Arg310. The Extracellular portion of the chain corresponds to 285–303 (RARLDFQTPEMCDFNDRVY). The helical transmembrane segment at 304 to 325 (ATYQVTRGLASLNSCVDPILYF) threads the bilayer. Residues 326-373 (LAGDTFRRRLSRATRKASRRSEANLQSKSEEMTLNILSEFKQNGDTSL) lie on the Cytoplasmic side of the membrane.

It belongs to the G-protein coupled receptor 1 family.

It is found in the cell membrane. Its function is as follows. Receptor for extracellular adenine nucleotides such as ADP. In platelets, binding to ADP leads to mobilization of intracellular calcium ions via activation of phospholipase C, a change in platelet shape, and ultimately platelet aggregation. In Mus musculus (Mouse), this protein is P2Y purinoceptor 1 (P2ry1).